A 116-amino-acid chain; its full sequence is uncharacterized protein (116 aa).

Residues 58–78 form a helical membrane-spanning segment; sequence IIVDFKFIFQIFLILSFGFFA.

The protein resides in the membrane. This is an uncharacterized protein from Rickettsia prowazekii (strain Madrid E).